The chain runs to 359 residues: 3-dehydroquinate synthase (359 aa).

Residues aspartate 71–lysine 76, glycine 105–aspartate 109, threonine 129–threonine 130, lysine 142, lysine 151, and threonine 169–threonine 172 contribute to the NAD(+) site. 3 residues coordinate Zn(2+): glutamate 184, histidine 247, and histidine 264.

Belongs to the sugar phosphate cyclases superfamily. Dehydroquinate synthase family. Requires Co(2+) as cofactor. The cofactor is Zn(2+). It depends on NAD(+) as a cofactor.

The protein resides in the cytoplasm. It catalyses the reaction 7-phospho-2-dehydro-3-deoxy-D-arabino-heptonate = 3-dehydroquinate + phosphate. The protein operates within metabolic intermediate biosynthesis; chorismate biosynthesis; chorismate from D-erythrose 4-phosphate and phosphoenolpyruvate: step 2/7. Catalyzes the conversion of 3-deoxy-D-arabino-heptulosonate 7-phosphate (DAHP) to dehydroquinate (DHQ). This chain is 3-dehydroquinate synthase, found in Neisseria gonorrhoeae (strain ATCC 700825 / FA 1090).